We begin with the raw amino-acid sequence, 255 residues long: Imidazole glycerol phosphate synthase subunit HisF (255 aa).

Residues Asp-11 and Asp-130 contribute to the active site.

This sequence belongs to the HisA/HisF family. In terms of assembly, heterodimer of HisH and HisF.

It is found in the cytoplasm. The enzyme catalyses 5-[(5-phospho-1-deoxy-D-ribulos-1-ylimino)methylamino]-1-(5-phospho-beta-D-ribosyl)imidazole-4-carboxamide + L-glutamine = D-erythro-1-(imidazol-4-yl)glycerol 3-phosphate + 5-amino-1-(5-phospho-beta-D-ribosyl)imidazole-4-carboxamide + L-glutamate + H(+). Its pathway is amino-acid biosynthesis; L-histidine biosynthesis; L-histidine from 5-phospho-alpha-D-ribose 1-diphosphate: step 5/9. In terms of biological role, IGPS catalyzes the conversion of PRFAR and glutamine to IGP, AICAR and glutamate. The HisF subunit catalyzes the cyclization activity that produces IGP and AICAR from PRFAR using the ammonia provided by the HisH subunit. The polypeptide is Imidazole glycerol phosphate synthase subunit HisF (Rhodopseudomonas palustris (strain HaA2)).